The chain runs to 230 residues: Uracil-DNA glycosylase (230 aa).

The active-site Proton acceptor is Asp-70.

Belongs to the uracil-DNA glycosylase (UDG) superfamily. UNG family.

It localises to the cytoplasm. The catalysed reaction is Hydrolyzes single-stranded DNA or mismatched double-stranded DNA and polynucleotides, releasing free uracil.. Its function is as follows. Excises uracil residues from the DNA which can arise as a result of misincorporation of dUMP residues by DNA polymerase or due to deamination of cytosine. The polypeptide is Uracil-DNA glycosylase (Pseudomonas putida (strain W619)).